The primary structure comprises 111 residues: Integration host factor subunit alpha (111 aa).

The protein belongs to the bacterial histone-like protein family. In terms of assembly, heterodimer of an alpha and a beta chain.

In terms of biological role, this protein is one of the two subunits of integration host factor, a specific DNA-binding protein that functions in genetic recombination as well as in transcriptional and translational control. The chain is Integration host factor subunit alpha from Chelativorans sp. (strain BNC1).